The chain runs to 176 residues: Ribosome maturation factor RimM (176 aa).

The region spanning 100 to 173 (EGEFHLLDLV…WLRLTPPPGL (74 aa)) is the PRC barrel domain.

The protein belongs to the RimM family. Binds ribosomal protein uS19.

It is found in the cytoplasm. Its function is as follows. An accessory protein needed during the final step in the assembly of 30S ribosomal subunit, possibly for assembly of the head region. Essential for efficient processing of 16S rRNA. May be needed both before and after RbfA during the maturation of 16S rRNA. It has affinity for free ribosomal 30S subunits but not for 70S ribosomes. The chain is Ribosome maturation factor RimM from Prochlorococcus marinus (strain MIT 9303).